We begin with the raw amino-acid sequence, 205 residues long: MSAQVRETLVPSELYRKAGVIYGTQICTRYMRQFVHRILPEGYYQLDYLKIDERLAMAAKFLSTFEPEKIAVVSVRIYGQKPVRMMCERVGCKAITGRIIPGTFTNPNLEHYVEPDVVVVTDPRMDRQAVVEASKVGIPVVALVDTDNSIENIDLVIPANNRGRRSLALIYWILTREILRRRGVLKPDEDLDVSYEEFMARKVFK.

The protein belongs to the universal ribosomal protein uS2 family.

The polypeptide is Small ribosomal subunit protein uS2 (rps2) (Aeropyrum pernix (strain ATCC 700893 / DSM 11879 / JCM 9820 / NBRC 100138 / K1)).